A 210-amino-acid polypeptide reads, in one-letter code: uncharacterized protein (210 aa).

This is an uncharacterized protein from Treponema pallidum (strain Nichols).